A 399-amino-acid chain; its full sequence is Nitric oxide reductase (399 aa).

A zinc metallo-hydrolase region spans residues 32-221 (HRGTTYNAYL…DEIQKINLAI (190 aa)). 6 residues coordinate Fe cation: His81, Glu83, Asp85, His148, Asp167, and His228. The region spanning 255–394 (AVIAYDTMWL…RCYELGRKIA (140 aa)) is the Flavodoxin-like domain.

In the N-terminal section; belongs to the zinc metallo-hydrolase group 3 family. Homodimer. Requires FMN as cofactor. Fe cation is required as a cofactor.

Its function is as follows. Has nitric oxide reductase activity in combination with Hrb; probably involved in nitrosative stress protection. This is Nitric oxide reductase (fprA) from Moorella thermoacetica (strain ATCC 39073 / JCM 9320).